The following is a 279-amino-acid chain: Cell division protein FtsQ (279 aa).

The segment at 1–28 is disordered; sequence MTPMKKQLDKSLGSRRGATATRAKERAD. The Cytoplasmic segment spans residues 1–48; it reads MTPMKKQLDKSLGSRRGATATRAKERADNRNTGPAAIVRLLAFIPWNR. A helical transmembrane segment spans residues 49-69; the sequence is VLLHVSIFCFWLLVLSALIAG. The Periplasmic portion of the chain corresponds to 70-279; it reads VKWLDRPVAT…WKADVTPEQG (210 aa). The 70-residue stretch at 75 to 144 folds into the POTRA domain; sequence RPVATVQVVG…DAVQVDLEEE (70 aa).

The protein belongs to the FtsQ/DivIB family. FtsQ subfamily. In terms of assembly, part of a complex composed of FtsB, FtsL and FtsQ.

The protein localises to the cell inner membrane. Essential cell division protein. May link together the upstream cell division proteins, which are predominantly cytoplasmic, with the downstream cell division proteins, which are predominantly periplasmic. May control correct divisome assembly. The polypeptide is Cell division protein FtsQ (Hahella chejuensis (strain KCTC 2396)).